A 401-amino-acid polypeptide reads, in one-letter code: Restriction of telomere capping protein 4 (401 aa).

Serine 23 carries the phosphoserine modification. The segment covering 35–48 (KHDIHDRESDDLSG) has biased composition (basic and acidic residues). The tract at residues 35–59 (KHDIHDRESDDLSGHDAFSPSKKRG) is disordered.

Belongs to the RTC4 family.

The protein localises to the cytoplasm. It localises to the nucleus. Functionally, may be involved in a process influencing telomere capping. The sequence is that of Restriction of telomere capping protein 4 (RTC4) from Saccharomyces cerevisiae (strain ATCC 204508 / S288c) (Baker's yeast).